The primary structure comprises 395 residues: DNA primase small subunit PriS (395 aa).

Active-site residues include D95, D97, and D302.

It belongs to the eukaryotic-type primase small subunit family. In terms of assembly, heterodimer of a small subunit (PriS) and a large subunit (PriL). It depends on Mg(2+) as a cofactor. Mn(2+) is required as a cofactor.

Its function is as follows. Catalytic subunit of DNA primase, an RNA polymerase that catalyzes the synthesis of short RNA molecules used as primers for DNA polymerase during DNA replication. The small subunit contains the primase catalytic core and has DNA synthesis activity on its own. Binding to the large subunit stabilizes and modulates the activity, increasing the rate of DNA synthesis while decreasing the length of the DNA fragments, and conferring RNA synthesis capability. The DNA polymerase activity may enable DNA primase to also catalyze primer extension after primer synthesis. May also play a role in DNA repair. This is DNA primase small subunit PriS from Methanothrix thermoacetophila (strain DSM 6194 / JCM 14653 / NBRC 101360 / PT) (Methanosaeta thermophila).